The following is a 156-amino-acid chain: Small ribosomal subunit protein uS7 (156 aa).

This sequence belongs to the universal ribosomal protein uS7 family. Part of the 30S ribosomal subunit. Contacts proteins S9 and S11.

Its function is as follows. One of the primary rRNA binding proteins, it binds directly to 16S rRNA where it nucleates assembly of the head domain of the 30S subunit. Is located at the subunit interface close to the decoding center, probably blocks exit of the E-site tRNA. The polypeptide is Small ribosomal subunit protein uS7 (Bradyrhizobium sp. (strain BTAi1 / ATCC BAA-1182)).